A 546-amino-acid polypeptide reads, in one-letter code: Chaperonin GroEL (546 aa).

Residues 29-32, Lys-50, 86-90, Gly-414, 477-479, and Asp-493 each bind ATP; these read TLGP, DGTTT, and NAL. Residues 522-546 form a disordered region; it reads KPEKDAPNPMAGMGGGGMGGMGGMM. Over residues 533 to 546 the composition is skewed to gly residues; the sequence is GMGGGGMGGMGGMM.

It belongs to the chaperonin (HSP60) family. As to quaternary structure, forms a cylinder of 14 subunits composed of two heptameric rings stacked back-to-back. Interacts with the co-chaperonin GroES.

It is found in the cytoplasm. It carries out the reaction ATP + H2O + a folded polypeptide = ADP + phosphate + an unfolded polypeptide.. In terms of biological role, together with its co-chaperonin GroES, plays an essential role in assisting protein folding. The GroEL-GroES system forms a nano-cage that allows encapsulation of the non-native substrate proteins and provides a physical environment optimized to promote and accelerate protein folding. The polypeptide is Chaperonin GroEL (Leptospira borgpetersenii serovar Hardjo-bovis (strain JB197)).